The primary structure comprises 393 residues: Arginine biosynthesis bifunctional protein ArgJ (393 aa).

Substrate contacts are provided by Thr-142, Lys-168, Thr-179, Glu-265, Asn-388, and Ser-393. Thr-179 (nucleophile) is an active-site residue.

Belongs to the ArgJ family. Heterotetramer of two alpha and two beta chains.

The protein resides in the cytoplasm. It carries out the reaction N(2)-acetyl-L-ornithine + L-glutamate = N-acetyl-L-glutamate + L-ornithine. It catalyses the reaction L-glutamate + acetyl-CoA = N-acetyl-L-glutamate + CoA + H(+). It participates in amino-acid biosynthesis; L-arginine biosynthesis; L-ornithine and N-acetyl-L-glutamate from L-glutamate and N(2)-acetyl-L-ornithine (cyclic): step 1/1. It functions in the pathway amino-acid biosynthesis; L-arginine biosynthesis; N(2)-acetyl-L-ornithine from L-glutamate: step 1/4. Catalyzes two activities which are involved in the cyclic version of arginine biosynthesis: the synthesis of N-acetylglutamate from glutamate and acetyl-CoA as the acetyl donor, and of ornithine by transacetylation between N(2)-acetylornithine and glutamate. The sequence is that of Arginine biosynthesis bifunctional protein ArgJ from Desulfotalea psychrophila (strain LSv54 / DSM 12343).